The chain runs to 1403 residues: Perilipin-4 (1403 aa).

The disordered stretch occupies residues 1–21; the sequence is MSASGDGTRVPPKSKGKTLSS. Ser25 and Ser31 each carry phosphoserine. The interval 33–70 is disordered; sequence RNLVSHTHSSTSTKDLQTATDPSGTPAPSSKVSTNSQM. Tandem repeats lie at residues 104 to 136, 137 to 169, 170 to 202, 203 to 235, 236 to 268, 269 to 301, 302 to 334, 335 to 367, 368 to 400, 401 to 433, 434 to 466, 467 to 499, 500 to 532, 533 to 565, 566 to 598, 599 to 631, 632 to 664, 665 to 697, 698 to 730, 731 to 763, 764 to 796, 797 to 829, 830 to 862, 863 to 895, 896 to 928, 929 to 961, 962 to 994, 995 to 1027, and 1028 to 1060. A 29 X 33 AA approximate tandem repeat region spans residues 104–1060; it reads GVFGIMDAAK…VTSAMNMAKG (957 aa). Ser1281 carries the post-translational modification Phosphoserine. Residue Thr1287 is modified to Phosphothreonine.

Belongs to the perilipin family. In terms of tissue distribution, specifically expressed in white adipose tissue and also weakly detected in heart and skeletal muscle (at protein level).

It localises to the cell membrane. It is found in the cytoplasm. The protein resides in the lipid droplet. In terms of biological role, may play a role in triacylglycerol packaging into adipocytes. May function as a coat protein involved in the biogenesis of lipid droplets. In Mus musculus (Mouse), this protein is Perilipin-4 (Plin4).